We begin with the raw amino-acid sequence, 78 residues long: Spermatid-specific protein T1 (78 aa).

Positions 1 to 21 (MKVAANSSKMLAEKLELMKGG) are hydrophobic. Residues 1-78 (MKVAANSSKM…YSRRRYRRRR (78 aa)) are disordered. Residues 20-78 (GGRRRRRRSRRRRRRSRRRSRSPYRRRYRRRRRRRRRRSRRRRYRRRRSYSRRRYRRRR) are compositionally biased toward basic residues.

Phosphorylation occurs at different degrees. The triphosphorylated form may be predominant in T1. SP1 appears to be phosphorylated in elongated spermatids, but dephosphorylated in mature sperm cells. Testis.

The protein resides in the nucleus. The protein localises to the chromosome. Cuttlefish spermiogenesis is characterized by a double nuclear protein transition: histones -&gt; spermatid-specific proteins (T1/T2) -&gt; protamines (SP1/SP2). The protamines compact sperm DNA into a highly condensed, stable and inactive complex. This chain is Spermatid-specific protein T1, found in Sepia officinalis (Common cuttlefish).